The following is a 559-amino-acid chain: T-complex protein 1 subunit gamma (559 aa).

A disulfide bridge connects residues C368 and C374. The disordered stretch occupies residues 531–559; sequence KDKRGGAGQRGGDRGQGDQEETFGDQRDG.

The protein belongs to the TCP-1 chaperonin family. Heterooligomeric complex of about 850 to 900 kDa that forms two stacked rings, 12 to 16 nm in diameter.

The protein resides in the cytoplasm. In terms of biological role, molecular chaperone; assists the folding of proteins upon ATP hydrolysis. Known to play a role, in vitro, in the folding of actin and tubulin. The sequence is that of T-complex protein 1 subunit gamma from Oxytricha granulifera (Ciliate).